Reading from the N-terminus, the 112-residue chain is Small ribosomal subunit protein bS6 (112 aa).

It belongs to the bacterial ribosomal protein bS6 family.

Its function is as follows. Binds together with bS18 to 16S ribosomal RNA. The polypeptide is Small ribosomal subunit protein bS6 (Chlamydia trachomatis serovar L2 (strain ATCC VR-902B / DSM 19102 / 434/Bu)).